Here is a 416-residue protein sequence, read N- to C-terminus: 3-oxoacyl-[acyl-carrier-protein] synthase 1 (416 aa).

In terms of domain architecture, Ketosynthase family 3 (KS3) spans F11–R415. Residues C171, H311, and H345 each act as for beta-ketoacyl synthase activity in the active site. Substrate contacts are provided by H311 and H345.

Belongs to the thiolase-like superfamily. Beta-ketoacyl-ACP synthases family.

It is found in the cytoplasm. The enzyme catalyses an ultra-long-chain mono-unsaturated fatty acyl-[ACP] + malonyl-[ACP] + H(+) = a 3-oxo-ultra-long-chain mono-unsaturated fatty acyl-[ACP] + holo-[ACP] + CO2. It participates in lipid metabolism; mycolic acid biosynthesis. In terms of biological role, part of the mycobacterial fatty acid elongation system FAS-II, which is involved in mycolic acid biosynthesis. Catalyzes the elongation of long chain acyl-ACP substrates by the addition of two carbons from malonyl-ACP to an acyl acceptor. Involved in the initial extension of the mycolate chain and forms monounsaturated fatty acids that averaged 40 carbons in length. The sequence is that of 3-oxoacyl-[acyl-carrier-protein] synthase 1 (kasA) from Mycobacterium tuberculosis (strain ATCC 35801 / TMC 107 / Erdman).